Consider the following 372-residue polypeptide: GDP-mannose 4,6 dehydratase (372 aa).

The interval Met1 to Pro22 is disordered. Ala2 bears the N-acetylalanine mark. NADP(+) is bound by residues Gly30–Asp35, Arg55–Ser58, Asp86–Leu87, Leu108–Ser112, and Tyr123. Thr155 is a catalytic residue. Residues Glu157 and Tyr179 each act as nucleophile in the active site. Lys183, His209, and Arg214 together coordinate NADP(+). Phosphotyrosine is present on Tyr323.

This sequence belongs to the NAD(P)-dependent epimerase/dehydratase family. GDP-mannose 4,6-dehydratase subfamily. The cofactor is NADP(+).

It catalyses the reaction GDP-alpha-D-mannose = GDP-4-dehydro-alpha-D-rhamnose + H2O. Its pathway is nucleotide-sugar biosynthesis; GDP-L-fucose biosynthesis via de novo pathway; GDP-L-fucose from GDP-alpha-D-mannose: step 1/2. Inhibited by GDP-fucose. Functionally, catalyzes the conversion of GDP-D-mannose to GDP-4-dehydro-6-deoxy-D-mannose. This is GDP-mannose 4,6 dehydratase (GMDS) from Cricetulus griseus (Chinese hamster).